We begin with the raw amino-acid sequence, 157 residues long: Phosphopantetheine adenylyltransferase (157 aa).

Belongs to the eukaryotic CoaD family. In terms of assembly, monomer.

It localises to the cytoplasm. The catalysed reaction is (R)-4'-phosphopantetheine + ATP + H(+) = 3'-dephospho-CoA + diphosphate. It participates in cofactor biosynthesis; coenzyme A biosynthesis. Functionally, reversibly transfers an adenylyl group from ATP to 4'-phosphopantetheine, yielding dephospho-CoA (dPCoA) and pyrophosphate. The chain is Phosphopantetheine adenylyltransferase from Pyrococcus abyssi (strain GE5 / Orsay).